The primary structure comprises 281 residues: ATP phosphoribosyltransferase (281 aa).

Belongs to the ATP phosphoribosyltransferase family. Long subfamily. It depends on Mg(2+) as a cofactor.

The protein localises to the cytoplasm. The catalysed reaction is 1-(5-phospho-beta-D-ribosyl)-ATP + diphosphate = 5-phospho-alpha-D-ribose 1-diphosphate + ATP. It functions in the pathway amino-acid biosynthesis; L-histidine biosynthesis; L-histidine from 5-phospho-alpha-D-ribose 1-diphosphate: step 1/9. Its activity is regulated as follows. Feedback inhibited by histidine. Its function is as follows. Catalyzes the condensation of ATP and 5-phosphoribose 1-diphosphate to form N'-(5'-phosphoribosyl)-ATP (PR-ATP). Has a crucial role in the pathway because the rate of histidine biosynthesis seems to be controlled primarily by regulation of HisG enzymatic activity. This is ATP phosphoribosyltransferase from Corynebacterium aurimucosum (strain ATCC 700975 / DSM 44827 / CIP 107346 / CN-1) (Corynebacterium nigricans).